The following is a 641-amino-acid chain: UPF0329 protein ECU11_0030 (641 aa).

The segment covering 358–387 (RQRKREEETERSVKELVGDEEKAKSKEEKA) has biased composition (basic and acidic residues). The interval 358–444 (RQRKREEETE…KGGKKKSKGG (87 aa)) is disordered. Over residues 435-444 (KGGKKKSKGG) the composition is skewed to basic residues.

The protein belongs to the UPF0329 family.

In Encephalitozoon cuniculi (strain GB-M1) (Microsporidian parasite), this protein is UPF0329 protein ECU11_0030.